The primary structure comprises 29 residues: Trypsin inhibitor 1 (29 aa).

Intrachain disulfides connect Cys-3–Cys-20, Cys-10–Cys-22, and Cys-16–Cys-28.

This sequence belongs to the protease inhibitor I7 (squash-type serine protease inhibitor) family.

The protein localises to the secreted. Its function is as follows. Inhibits trypsin. In Luffa aegyptiaca (Sponge gourd), this protein is Trypsin inhibitor 1.